Consider the following 392-residue polypeptide: Chloramphenicol resistance protein (392 aa).

The next 12 membrane-spanning stretches (helical) occupy residues 6–26, 42–62, 71–91, 100–120, 129–149, 160–180, 205–225, 239–259, 268–288, 294–314, 332–352, and 358–378; these read YLLA…AGLV, TLTS…AALA, LLGF…TTSF, VAAL…AALV, LAVL…GGSL, FWAV…AIPA, LLLA…SFTF, LWIS…VTVA, AQVL…LAML, ALLT…STLI, ATAA…TTLG, and LGPL…AFPF.

This sequence belongs to the major facilitator superfamily.

The protein localises to the cell membrane. The polypeptide is Chloramphenicol resistance protein (cmlR) (Streptomyces lividans).